We begin with the raw amino-acid sequence, 403 residues long: D-mannonate dehydratase Caul1427 (403 aa).

2 residues coordinate substrate: Asn38 and His123. The Proton donor/acceptor role is filled by Tyr160. Asp211 lines the Mg(2+) pocket. His213 serves as the catalytic Proton donor/acceptor. Positions 237 and 263 each coordinate Mg(2+). Glu263, Arg284, His313, Asp317, and Glu340 together coordinate substrate.

Belongs to the mandelate racemase/muconate lactonizing enzyme family. GalD subfamily. It depends on Mg(2+) as a cofactor.

The enzyme catalyses D-mannonate = 2-dehydro-3-deoxy-D-gluconate + H2O. It participates in carbohydrate metabolism; pentose and glucuronate interconversion. Functionally, catalyzes the dehydration of D-mannonate. Has no detectable activity with a panel of 70 other acid sugars (in vitro). The sequence is that of D-mannonate dehydratase Caul1427 from Caulobacter sp. (strain K31).